Here is a 62-residue protein sequence, read N- to C-terminus: Photosystem II reaction center protein Z (62 aa).

Transmembrane regions (helical) follow at residues 8–28 (ALFALIATSFLLVVGVPVAFA) and 41–61 (FSGASLWIGLVFLVGIPNSFI).

It belongs to the PsbZ family. In terms of assembly, PSII is composed of 1 copy each of membrane proteins PsbA, PsbB, PsbC, PsbD, PsbE, PsbF, PsbH, PsbI, PsbJ, PsbK, PsbL, PsbM, PsbT, PsbY, PsbZ, Psb30/Ycf12, at least 3 peripheral proteins of the oxygen-evolving complex and a large number of cofactors. It forms dimeric complexes.

Its subcellular location is the plastid. It is found in the chloroplast thylakoid membrane. May control the interaction of photosystem II (PSII) cores with the light-harvesting antenna, regulates electron flow through the 2 photosystem reaction centers. PSII is a light-driven water plastoquinone oxidoreductase, using light energy to abstract electrons from H(2)O, generating a proton gradient subsequently used for ATP formation. The sequence is that of Photosystem II reaction center protein Z from Adiantum capillus-veneris (Maidenhair fern).